Reading from the N-terminus, the 578-residue chain is Kelch repeat-containing protein kel-10 (578 aa).

The BTB domain occupies 51–118 (PTVTLVLRNN…PKAFEQGIKP (68 aa)). The BACK domain maps to 158 to 236 (IKIFRLALLY…NSPLQSDRMA (79 aa)). 6 Kelch repeats span residues 265–315 (AIVC…VVED), 316–362 (KLIV…RIND), 368–414 (LIFA…TIDN), 416–462 (IVVI…SIMN), 464–510 (VCMI…QMDT), and 512–558 (SIYV…TLSD).

The polypeptide is Kelch repeat-containing protein kel-10 (Caenorhabditis elegans).